Consider the following 294-residue polypeptide: MAIAEEPAQAPVIQRIALVIQYLGQGFCGWQRQPRQRSVQGELESAIAAVVGHPVSVQSAGRTDTGVHAAAQVAHFETTSPIPAHRWPSVLNGRLTPDLNIRAAAIVPANWHARFSASYRRYRYTIYTDPCPNLFLNSYVWHYYQAPLCENQMQAALQTLVGYHHLAAFQRSGSKRQHAWVHVQDAWVRRRDSLIEIEVQASGFLYGMIRLLVGLLVQVGEGSRSLESFTDIWVNQRRDRVRHAAPPQGLCLLRIGYPDSPFPVDAWFDTQPLFVLPSSRNDSESLSPCAVSLG.

Residue Asp64 is the Nucleophile of the active site. Tyr122 is a substrate binding site.

The protein belongs to the tRNA pseudouridine synthase TruA family. In terms of assembly, homodimer.

It carries out the reaction uridine(38/39/40) in tRNA = pseudouridine(38/39/40) in tRNA. Formation of pseudouridine at positions 38, 39 and 40 in the anticodon stem and loop of transfer RNAs. This is tRNA pseudouridine synthase A from Synechococcus sp. (strain ATCC 27144 / PCC 6301 / SAUG 1402/1) (Anacystis nidulans).